We begin with the raw amino-acid sequence, 339 residues long: Formyl peptide receptor-related sequence 6 (339 aa).

The Extracellular portion of the chain corresponds to 1–23 (MEANFSIPQNGSEVVFYDSTTSR). Residues Asn-4 and Asn-10 are each glycosylated (N-linked (GlcNAc...) asparagine). A helical transmembrane segment spans residues 24-44 (VICIFLVVVLSITFLLGVIGN). At 45 to 62 (GLVIYVAGFRMTHTVTTI) the chain is on the cytoplasmic side. Residues 63 to 85 (CYLNLALSDFSYMASLPFQITSI) traverse the membrane as a helical segment. The Extracellular segment spans residues 86–99 (VMNGEWLFGWFLCK). Cys-98 and Cys-178 form a disulfide bridge. A helical transmembrane segment spans residues 100 to 120 (FVHMIINVNLFLSIFLITFIA). Residues 121–144 (MDRCICVLHPVWAQNHRTVNVATK) are Cytoplasmic-facing. Residues 145–165 (VIFGAWILVLMLIFPHCIFVT) form a helical membrane-spanning segment. Topologically, residues 166–198 (TVKDESGKVHCICNFESWAATPEEQVKVSMTVS) are extracellular. A helical transmembrane segment spans residues 199-219 (LISVTISFIIGFSIPMIFIVI). Residues 220–241 (CYGLMAAKIGRRGFVNSSRPLR) lie on the Cytoplasmic side of the membrane. The chain crosses the membrane as a helical span at residues 242 to 262 (VLTAVAISFFVCWFPFQLIFL). Residues 263–280 (LGNIGNKETQNNIDTWVN) are Extracellular-facing. A helical transmembrane segment spans residues 281–301 (TASTLASFNSCLNPILYVFLG). Topologically, residues 302-339 (QQFRERLIYSLSASLERALREDSALNSDKTRNLSSQRL) are cytoplasmic.

It belongs to the G-protein coupled receptor 1 family. Expressed exclusively in vomeronasal tissue. Expressed in 1.2 % of a subset of sensory neurons located in the apical layer of the vomeronasal organ. Each neuron appears to express only one receptor gene. Expressed in brain, spleen, skeletal muscle and at high level in testis.

It is found in the membrane. Its function is as follows. May have an olfactory function associated with the identification of pathogens or of pathogenic states. The chain is Formyl peptide receptor-related sequence 6 (Fpr-rs6) from Mus musculus (Mouse).